We begin with the raw amino-acid sequence, 165 residues long: Dihydrofolate reductase type A13 (165 aa).

One can recognise a DHFR domain in the interval 7–162; it reads RIYLVAAMGA…ITYTHSVYAR (156 aa).

Belongs to the dihydrofolate reductase family. In terms of assembly, homodimer.

The enzyme catalyses (6S)-5,6,7,8-tetrahydrofolate + NADP(+) = 7,8-dihydrofolate + NADPH + H(+). Its pathway is cofactor biosynthesis; tetrahydrofolate biosynthesis; 5,6,7,8-tetrahydrofolate from 7,8-dihydrofolate: step 1/1. In terms of biological role, key enzyme in folate metabolism. Catalyzes an essential reaction for de novo glycine and purine synthesis, and for DNA precursor synthesis. This Escherichia coli protein is Dihydrofolate reductase type A13 (dfrA13).